Reading from the N-terminus, the 154-residue chain is Small ribosomal subunit protein uS11c (154 aa).

It belongs to the universal ribosomal protein uS11 family. In terms of assembly, part of the 30S ribosomal subunit.

It is found in the plastid. The chain is Small ribosomal subunit protein uS11c from Helicosporidium sp. subsp. Simulium jonesii (Green alga).